The sequence spans 461 residues: Steroidogenic factor 1 (461 aa).

Residues 10-85 constitute a DNA-binding region (nuclear receptor); that stretch reads DELCPVCGDK…VGMRLEAVRA (76 aa). The NR C4-type zinc-finger motif lies at 13–33; that stretch reads CPVCGDKVSGYHYGLLTCESC. Lysine 34, lysine 38, and lysine 72 each carry N6-acetyllysine. The NR C4-type zinc finger occupies 49 to 73; that stretch reads CTESQSCKIDKTQRKRCPFCRFQKC. Residue lysine 119 forms a Glycyl lysine isopeptide (Lys-Gly) (interchain with G-Cter in SUMO) linkage. The disordered stretch occupies residues 119-150; that stretch reads KLETGPPMGVAPPPPPPPDYMLPPGLHAPEPK. Residues 127 to 139 are compositionally biased toward pro residues; the sequence is GVAPPPPPPPDYM. Lysine 194 is covalently cross-linked (Glycyl lysine isopeptide (Lys-Gly) (interchain with G-Cter in SUMO)). A Phosphoserine; by CDK7 modification is found at serine 203. The NR LBD domain occupies 222 to 459; it reads GVPELIVQLL…NLLIEMLQAK (238 aa). The segment at 230–461 is important for dimerization; it reads LLQLEPDEDQ…LIEMLQAKQT (232 aa). Residues glycine 341, tyrosine 436, and lysine 440 each contribute to the a 1,2-diacyl-sn-glycero-3-phosphocholine site.

The protein belongs to the nuclear hormone receptor family. NR5 subfamily. In terms of assembly, binds DNA as a monomer. Part of a complex consisting of SFPQ, NONO and NR5A1. Interacts with NR0B2, NCOA2 and PPARGC1A. Interacts with DGKQ and CDK7. Binds to and activated by HIPK3. In terms of processing, acetylation stimulates the transcriptional activity. Sumoylation reduces CDK7-mediated phosphorylation on Ser-203. Post-translationally, phosphorylated on Ser-203 by CDK7. This phosphorylation promotes transcriptional activity.

It localises to the nucleus. Transcriptional activator. Seems to be essential for sexual differentiation and formation of the primary steroidogenic tissues. Binds to the Ad4 site found in the promoter region of steroidogenic P450 genes such as CYP11A, CYP11B and CYP21B. Also regulates the AMH/Muellerian inhibiting substance gene as well as the AHCH and STAR genes. 5'-YCAAGGYC-3' and 5'-RRAGGTCA-3' are the consensus sequences for the recognition by NR5A1. The SFPQ-NONO-NR5A1 complex binds to the CYP17 promoter and regulates basal and cAMP-dependent transcriptional activity. Binds phosphatidylcholine and phospholipids with a phosphatidylinositol (PI) headgroup, in particular PI(3,4)P2 and PI(3,4,5)P3. Activated by the phosphorylation of NR5A1 by HIPK3 leading to increased steroidogenic gene expression upon cAMP signaling pathway stimulation. The sequence is that of Steroidogenic factor 1 (NR5A1) from Sus scrofa (Pig).